The following is a 404-amino-acid chain: Phosphopentomutase (404 aa).

Residues Asp10, Asp303, His308, Asp344, His345, and His356 each coordinate Mn(2+).

The protein belongs to the phosphopentomutase family. Requires Mn(2+) as cofactor.

The protein localises to the cytoplasm. The catalysed reaction is 2-deoxy-alpha-D-ribose 1-phosphate = 2-deoxy-D-ribose 5-phosphate. It carries out the reaction alpha-D-ribose 1-phosphate = D-ribose 5-phosphate. It participates in carbohydrate degradation; 2-deoxy-D-ribose 1-phosphate degradation; D-glyceraldehyde 3-phosphate and acetaldehyde from 2-deoxy-alpha-D-ribose 1-phosphate: step 1/2. Isomerase that catalyzes the conversion of deoxy-ribose 1-phosphate (dRib-1-P) and ribose 1-phosphate (Rib-1-P) to deoxy-ribose 5-phosphate (dRib-5-P) and ribose 5-phosphate (Rib-5-P), respectively. The polypeptide is Phosphopentomutase (Shewanella sp. (strain W3-18-1)).